The following is a 30-amino-acid chain: Cycloviolacin-O9 (30 aa).

The cyclopeptide (Gly-Asn) cross-link spans 1–30; the sequence is GIPCGESCVWIPCLTSAVGCSCKSKVCYRN. 3 cysteine pairs are disulfide-bonded: cysteine 4/cysteine 20, cysteine 8/cysteine 22, and cysteine 13/cysteine 27.

Post-translationally, this is a cyclic peptide.

Its function is as follows. Probably participates in a plant defense mechanism. This is Cycloviolacin-O9 from Viola odorata (Sweet violet).